A 142-amino-acid chain; its full sequence is Large ribosomal subunit protein uL11 (142 aa).

The protein belongs to the universal ribosomal protein uL11 family. As to quaternary structure, part of the ribosomal stalk of the 50S ribosomal subunit. Interacts with L10 and the large rRNA to form the base of the stalk. L10 forms an elongated spine to which L12 dimers bind in a sequential fashion forming a multimeric L10(L12)X complex. In terms of processing, one or more lysine residues are methylated.

In terms of biological role, forms part of the ribosomal stalk which helps the ribosome interact with GTP-bound translation factors. This is Large ribosomal subunit protein uL11 from Desulforudis audaxviator (strain MP104C).